Reading from the N-terminus, the 158-residue chain is Vasotocin-neurophysin VT 2 (158 aa).

The first 19 residues, 1-19, serve as a signal peptide directing secretion; it reads MPHSTLLLCVIGLLAFSSA. Cysteines 20 and 25 form a disulfide. Glycine 28 bears the Glycine amide mark. 7 disulfide bridges follow: cysteine 41-cysteine 85, cysteine 44-cysteine 58, cysteine 52-cysteine 75, cysteine 59-cysteine 65, cysteine 92-cysteine 105, cysteine 99-cysteine 117, and cysteine 106-cysteine 111.

The protein belongs to the vasopressin/oxytocin family. Seven disulfide bonds are present in neurophysin.

It is found in the secreted. Its function is as follows. Vasotocin is an antidiuretic hormone. The chain is Vasotocin-neurophysin VT 2 from Oncorhynchus keta (Chum salmon).